We begin with the raw amino-acid sequence, 723 residues long: Malonamoyl-CoA synthetase vrtB (723 aa).

Belongs to the ATP-dependent AMP-binding enzyme family.

The protein operates within secondary metabolite biosynthesis; terpenoid biosynthesis. Its function is as follows. Malonamoyl-CoA synthetase; part of the gene cluster that mediates the biosynthesis of viridicatumtoxin, a tetracycline-like fungal meroterpenoid with a unique, fused spirobicyclic ring system. The first step of the pathway is the production of the malonamoyl-CoA starter unit for the polyketide synthase vrtA. The aldolase vrtJ may be involved in the synthesis of the malonamate substrate for malonamoyl-CoA synthetase vrtB. The polyketide synthase vrtA then may utilize the malonamoyl-CoA starter unit, followed by sequential condensation of eight malonyl-CoA units to form the polyketide backbone. The cyclization of the last ring could be mediated by the lactamase-like protein vrtG. The proposed post-PKS tailoring steps are a hydroxylation at C5 catalyzed the cytochrome P450 monooxygenase vrtE, a hydroxylation at C12a catalyzed by VrtH and/or VrtI, and an O-methylation by the O-methyltransferase vrtF. VrtC is then proposed to catalyze the transfer of a geranyl group synthesized by vrtD to the aromatic C ring of the tetracyclic polyketide intermediate of viridicatumtoxin to yield previridicatumtoxin. Finally, the cytochrome P450 monooxygenase vrtK catalyzes the spirocyclization of the geranyl moiety of previridicatumtoxin to afford viridicatumtoxin. This chain is Malonamoyl-CoA synthetase vrtB, found in Penicillium aethiopicum.